A 186-amino-acid polypeptide reads, in one-letter code: Peptidyl-tRNA hydrolase (186 aa).

Tyr-13 provides a ligand contact to tRNA. The active-site Proton acceptor is the His-18. Residues Tyr-59, Asn-61, and Asn-107 each contribute to the tRNA site.

The protein belongs to the PTH family. Monomer.

It is found in the cytoplasm. It catalyses the reaction an N-acyl-L-alpha-aminoacyl-tRNA + H2O = an N-acyl-L-amino acid + a tRNA + H(+). Its function is as follows. Hydrolyzes ribosome-free peptidyl-tRNAs (with 1 or more amino acids incorporated), which drop off the ribosome during protein synthesis, or as a result of ribosome stalling. Catalyzes the release of premature peptidyl moieties from peptidyl-tRNA molecules trapped in stalled 50S ribosomal subunits, and thus maintains levels of free tRNAs and 50S ribosomes. The polypeptide is Peptidyl-tRNA hydrolase (Thermotoga maritima (strain ATCC 43589 / DSM 3109 / JCM 10099 / NBRC 100826 / MSB8)).